Reading from the N-terminus, the 432-residue chain is Glutamyl-tRNA reductase (432 aa).

Substrate contacts are provided by residues 49–52 (TCNR), S107, 112–114 (ETQ), and Q118. The Nucleophile role is filled by C50. An NADP(+)-binding site is contributed by 186–191 (GAGEMG).

It belongs to the glutamyl-tRNA reductase family. As to quaternary structure, homodimer.

The catalysed reaction is (S)-4-amino-5-oxopentanoate + tRNA(Glu) + NADP(+) = L-glutamyl-tRNA(Glu) + NADPH + H(+). The protein operates within porphyrin-containing compound metabolism; protoporphyrin-IX biosynthesis; 5-aminolevulinate from L-glutamyl-tRNA(Glu): step 1/2. Functionally, catalyzes the NADPH-dependent reduction of glutamyl-tRNA(Glu) to glutamate 1-semialdehyde (GSA). This is Glutamyl-tRNA reductase from Campylobacter jejuni subsp. jejuni serotype O:23/36 (strain 81-176).